The following is a 231-amino-acid chain: DNA mismatch repair protein MutH (231 aa).

The protein belongs to the MutH family.

It is found in the cytoplasm. Its function is as follows. Sequence-specific endonuclease that cleaves unmethylated GATC sequences. It is involved in DNA mismatch repair. In Salmonella paratyphi C (strain RKS4594), this protein is DNA mismatch repair protein MutH.